Here is a 295-residue protein sequence, read N- to C-terminus: Pyridoxal 5'-phosphate synthase subunit PdxS (295 aa).

Position 25 (Asp-25) interacts with D-ribose 5-phosphate. The active-site Schiff-base intermediate with D-ribose 5-phosphate is the Lys-82. Gly-154 is a binding site for D-ribose 5-phosphate. Arg-166 provides a ligand contact to D-glyceraldehyde 3-phosphate. D-ribose 5-phosphate is bound by residues Gly-215 and 236–237 (GS).

It belongs to the PdxS/SNZ family. In terms of assembly, in the presence of PdxT, forms a dodecamer of heterodimers.

The enzyme catalyses aldehydo-D-ribose 5-phosphate + D-glyceraldehyde 3-phosphate + L-glutamine = pyridoxal 5'-phosphate + L-glutamate + phosphate + 3 H2O + H(+). It functions in the pathway cofactor biosynthesis; pyridoxal 5'-phosphate biosynthesis. Catalyzes the formation of pyridoxal 5'-phosphate from ribose 5-phosphate (RBP), glyceraldehyde 3-phosphate (G3P) and ammonia. The ammonia is provided by the PdxT subunit. Can also use ribulose 5-phosphate and dihydroxyacetone phosphate as substrates, resulting from enzyme-catalyzed isomerization of RBP and G3P, respectively. The polypeptide is Pyridoxal 5'-phosphate synthase subunit PdxS (Bacillus anthracis (strain A0248)).